Consider the following 239-residue polypeptide: Homeobox protein Nkx-2.8 (239 aa).

A compositionally biased stretch (polar residues) spans 1 to 11; it reads MATSGRLSFTV. The disordered stretch occupies residues 1–87; sequence MATSGRLSFT…GSDAEKRKKR (87 aa). Residues 21–32 show a composition bias toward basic and acidic residues; it reads DAQHLPRREPEP. The span at 62-79 shows a compositional bias: low complexity; sequence SPPDSSQRPSARPASPGS. The segment at residues 84 to 143 is a DNA-binding region (homeobox); sequence RKKRRVLFSKAQTLELERRFRQQRYLSAPEREQLASLLRLTPTQVKIWFQNHRYKLKRAR.

The protein belongs to the NK-2 homeobox family.

It is found in the nucleus. In Homo sapiens (Human), this protein is Homeobox protein Nkx-2.8 (NKX2-8).